We begin with the raw amino-acid sequence, 593 residues long: Aspartate--tRNA ligase (593 aa).

Glu173 contacts L-aspartate. Positions Gln197–Lys200 are aspartate. Residue Arg219 coordinates L-aspartate. ATP-binding positions include Arg219–Glu221 and Gln228. Residue His449 coordinates L-aspartate. Glu483 contributes to the ATP binding site. Residue Arg490 coordinates L-aspartate. Gly535–Arg538 contacts ATP.

The protein belongs to the class-II aminoacyl-tRNA synthetase family. Type 1 subfamily. In terms of assembly, homodimer.

It localises to the cytoplasm. The enzyme catalyses tRNA(Asp) + L-aspartate + ATP = L-aspartyl-tRNA(Asp) + AMP + diphosphate. In terms of biological role, catalyzes the attachment of L-aspartate to tRNA(Asp) in a two-step reaction: L-aspartate is first activated by ATP to form Asp-AMP and then transferred to the acceptor end of tRNA(Asp). In Shewanella piezotolerans (strain WP3 / JCM 13877), this protein is Aspartate--tRNA ligase.